The primary structure comprises 215 residues: 5'-deoxynucleotidase YGK1 (215 aa).

Residues 58 to 164 (ISDHMYRMGL…VKDIDKYEML (107 aa)) form the HD domain. Residues H61, H89, D90, E93, D98, I99, and D159 each contribute to the a divalent metal cation site.

The protein belongs to the HDDC2 family. Homodimer. Requires Mn(2+) as cofactor. Co(2+) serves as cofactor. Mg(2+) is required as a cofactor.

The enzyme catalyses a 2'-deoxyribonucleoside 5'-phosphate + H2O = a 2'-deoxyribonucleoside + phosphate. Functionally, catalyzes the dephosphorylation of the nucleoside 5'-monophosphates deoxyadenosine monophosphate (dAMP), deoxycytidine monophosphate (dCMP), deoxyguanosine monophosphate (dGMP) and deoxythymidine monophosphate (dTMP). The polypeptide is 5'-deoxynucleotidase YGK1 (Saccharomyces cerevisiae (strain ATCC 204508 / S288c) (Baker's yeast)).